A 396-amino-acid polypeptide reads, in one-letter code: Elongation factor Tu (396 aa).

Residues 10 to 206 enclose the tr-type G domain; sequence KPHVNIGTIG…AVDAYIPEPE (197 aa). The tract at residues 19-26 is G1; it reads GHVDHGKT. 19-26 lines the GTP pocket; it reads GHVDHGKT. Mg(2+) is bound at residue threonine 26. The interval 60-64 is G2; sequence GITIS. The segment at 81–84 is G3; sequence DCPG. Residues 81–85 and 136–139 each bind GTP; these read DCPGH and NKVD. The tract at residues 136 to 139 is G4; that stretch reads NKVD. The tract at residues 174–176 is G5; it reads SAL.

Belongs to the TRAFAC class translation factor GTPase superfamily. Classic translation factor GTPase family. EF-Tu/EF-1A subfamily. In terms of assembly, monomer.

Its subcellular location is the cytoplasm. It catalyses the reaction GTP + H2O = GDP + phosphate + H(+). Functionally, GTP hydrolase that promotes the GTP-dependent binding of aminoacyl-tRNA to the A-site of ribosomes during protein biosynthesis. In Magnetococcus marinus (strain ATCC BAA-1437 / JCM 17883 / MC-1), this protein is Elongation factor Tu.